Consider the following 125-residue polypeptide: Fluoride-specific ion channel FluC (125 aa).

4 helical membrane-spanning segments follow: residues V6–I26, F35–A55, L66–I86, and A100–L120. Na(+) is bound by residues G76 and T79.

Belongs to the fluoride channel Fluc/FEX (TC 1.A.43) family.

It localises to the cell inner membrane. The enzyme catalyses fluoride(in) = fluoride(out). Its activity is regulated as follows. Na(+) is not transported, but it plays an essential structural role and its presence is essential for fluoride channel function. Functionally, fluoride-specific ion channel. Important for reducing fluoride concentration in the cell, thus reducing its toxicity. The polypeptide is Fluoride-specific ion channel FluC (Gloeobacter violaceus (strain ATCC 29082 / PCC 7421)).